Consider the following 156-residue polypeptide: ATP synthase subunit b (156 aa).

The helical transmembrane segment at Ala-11–Gly-31 threads the bilayer.

This sequence belongs to the ATPase B chain family. As to quaternary structure, F-type ATPases have 2 components, F(1) - the catalytic core - and F(0) - the membrane proton channel. F(1) has five subunits: alpha(3), beta(3), gamma(1), delta(1), epsilon(1). F(0) has three main subunits: a(1), b(2) and c(10-14). The alpha and beta chains form an alternating ring which encloses part of the gamma chain. F(1) is attached to F(0) by a central stalk formed by the gamma and epsilon chains, while a peripheral stalk is formed by the delta and b chains.

It localises to the cell inner membrane. F(1)F(0) ATP synthase produces ATP from ADP in the presence of a proton or sodium gradient. F-type ATPases consist of two structural domains, F(1) containing the extramembraneous catalytic core and F(0) containing the membrane proton channel, linked together by a central stalk and a peripheral stalk. During catalysis, ATP synthesis in the catalytic domain of F(1) is coupled via a rotary mechanism of the central stalk subunits to proton translocation. Functionally, component of the F(0) channel, it forms part of the peripheral stalk, linking F(1) to F(0). The chain is ATP synthase subunit b from Psychrobacter cryohalolentis (strain ATCC BAA-1226 / DSM 17306 / VKM B-2378 / K5).